Reading from the N-terminus, the 357-residue chain is S-adenosylmethionine:tRNA ribosyltransferase-isomerase (357 aa).

This sequence belongs to the QueA family. In terms of assembly, monomer.

Its subcellular location is the cytoplasm. The enzyme catalyses 7-aminomethyl-7-carbaguanosine(34) in tRNA + S-adenosyl-L-methionine = epoxyqueuosine(34) in tRNA + adenine + L-methionine + 2 H(+). The protein operates within tRNA modification; tRNA-queuosine biosynthesis. Functionally, transfers and isomerizes the ribose moiety from AdoMet to the 7-aminomethyl group of 7-deazaguanine (preQ1-tRNA) to give epoxyqueuosine (oQ-tRNA). In Buchnera aphidicola subsp. Acyrthosiphon pisum (strain APS) (Acyrthosiphon pisum symbiotic bacterium), this protein is S-adenosylmethionine:tRNA ribosyltransferase-isomerase.